Reading from the N-terminus, the 242-residue chain is E3 ubiquitin-protein ligase ZNRF2 (242 aa).

The tract at residues 1 to 141 (MGAKQSGPAA…VGGSPGGPRL (141 aa)) is disordered. Residue Gly-2 is the site of N-myristoyl glycine attachment. A phosphoserine mark is found at Ser-19, Ser-21, and Ser-25. Positions 19-29 (SGSDLPSSSSG) are enriched in low complexity. Residues 30–41 (GANGTAGGGGGA) are compositionally biased toward gly residues. A compositionally biased stretch (low complexity) spans 59-97 (PSASGGAAAAAAAPAAPAAPRSRSLGGAVGSVASGARAA). A phosphoserine mark is found at Ser-82, Ser-89, Ser-113, Ser-116, and Ser-135. Residues 99–118 (SPFSIPNSSSGPYGSQDSVH) are compositionally biased toward polar residues. Phosphoserine; by MTOR is present on Ser-145. Phosphoserine occurs at positions 151 and 193. The segment at 199-240 (CAICLEELQQGDTIARLPCLCIYHKGCIDEWFEVNRSCPEHP) adopts an RING-type; atypical zinc-finger fold.

Interacts with UBE2N. Interacts with ZNRF1. Interacts (when phosphorylated) with YWHAE. Phosphorylated; leading to binding to YWHAE. Phosphorylated by MTOR at Ser-145 and dephosphorylated by PP6C. Ser-145 phosphorylation stimulates vesicle-to-cytosol translocation. Highly expressed in the brain, with higher expression during development than in adult. Expressed also in mammary glands, testis, colon and kidney.

It localises to the endosome membrane. The protein resides in the lysosome membrane. It is found in the presynaptic cell membrane. The protein localises to the cytoplasm. It carries out the reaction S-ubiquitinyl-[E2 ubiquitin-conjugating enzyme]-L-cysteine + [acceptor protein]-L-lysine = [E2 ubiquitin-conjugating enzyme]-L-cysteine + N(6)-ubiquitinyl-[acceptor protein]-L-lysine.. Its pathway is protein modification; protein ubiquitination. Functionally, E3 ubiquitin-protein ligase that plays a role in the establishment and maintenance of neuronal transmission and plasticity. Ubiquitinates the Na(+)/K(+) ATPase alpha-1 subunit/ATP1A1 and thereby influences its endocytosis and/or degradation. Acts also as a positive regulator of mTORC1 activation by amino acids, which functions upstream of the V-ATPase and of Rag-GTPases. In turn, phosphorylation by mTOR leads to its inhibition via targeting to the cytosol allowing a self-regulating feedback mechanism. This chain is E3 ubiquitin-protein ligase ZNRF2 (ZNRF2), found in Homo sapiens (Human).